Consider the following 278-residue polypeptide: ATP synthase subunit a (278 aa).

6 helical membrane passes run 43 to 63, 104 to 124, 148 to 168, 191 to 211, 222 to 242, and 249 to 269; these read TWHI…LWIF, IAPL…MDMI, DVNI…FYSI, IPVN…SLAL, LIFI…TLGV, and LIFH…LTIV.

This sequence belongs to the ATPase A chain family. F-type ATPases have 2 components, CF(1) - the catalytic core - and CF(0) - the membrane proton channel. CF(1) has five subunits: alpha(3), beta(3), gamma(1), delta(1), epsilon(1). CF(0) has three main subunits: a(1), b(2) and c(9-12). The alpha and beta chains form an alternating ring which encloses part of the gamma chain. CF(1) is attached to CF(0) by a central stalk formed by the gamma and epsilon chains, while a peripheral stalk is formed by the delta and b chains.

It localises to the cell inner membrane. Its function is as follows. Key component of the proton channel; it plays a direct role in the translocation of protons across the membrane. This chain is ATP synthase subunit a, found in Shewanella baltica (strain OS185).